The following is a 134-amino-acid chain: Large ribosomal subunit protein eL32 (134 aa).

Belongs to the eukaryotic ribosomal protein eL32 family.

The sequence is that of Large ribosomal subunit protein eL32 (rpl32e) from Picrophilus torridus (strain ATCC 700027 / DSM 9790 / JCM 10055 / NBRC 100828 / KAW 2/3).